A 732-amino-acid polypeptide reads, in one-letter code: Ribosomal RNA large subunit methyltransferase K/L (732 aa).

The 113-residue stretch at 50 to 162 folds into the THUMP domain; the sequence is MAYRICLWSR…RGRLLLGLDL (113 aa). A disordered region spans residues 396-424; it reads TERETSSEGDEPQGASGATSRPGPRNDGA.

The protein belongs to the methyltransferase superfamily. RlmKL family.

The protein localises to the cytoplasm. It catalyses the reaction guanosine(2445) in 23S rRNA + S-adenosyl-L-methionine = N(2)-methylguanosine(2445) in 23S rRNA + S-adenosyl-L-homocysteine + H(+). The enzyme catalyses guanosine(2069) in 23S rRNA + S-adenosyl-L-methionine = N(2)-methylguanosine(2069) in 23S rRNA + S-adenosyl-L-homocysteine + H(+). Specifically methylates the guanine in position 2445 (m2G2445) and the guanine in position 2069 (m7G2069) of 23S rRNA. The sequence is that of Ribosomal RNA large subunit methyltransferase K/L from Chromohalobacter salexigens (strain ATCC BAA-138 / DSM 3043 / CIP 106854 / NCIMB 13768 / 1H11).